Here is a 383-residue protein sequence, read N- to C-terminus: MKNKLPPFIEIYRALIATPSISATEEALDQSNADLITLLADWFKDLGFNVEVQPVPGTRNKFNMLASIGQGAGGLLLAGHTDTVPFDDGRWTRDPFTLTEHDGKLYGLGTADMKGFFAFILDTLRDVDVTKLKKPLYILATADEETSMAGARYFAETTALRPDCAIIGEPTSLQPVRAHKGHISNAIRIQGQSGHSSDPARGVNAIELMHDAIGHILQLRDNLKERYHYEAFTVPYPTLNLGHIHGGDASNRICACCELHMDIRPLPSMTLNELNGLLNDALAPVSERWPGRLTVDELHPPIPGYECPPNHQLVEVVEKLLGAKTEVVNYCTEAPFIQTLCPTLVLGPGSINQAHQPDEYLETRFIKPTRELIIQVIHHFCWH.

His-80 is a binding site for Zn(2+). Asp-82 is a catalytic residue. Asp-112 serves as a coordination point for Zn(2+). Glu-144 is an active-site residue. Residues Glu-145, Glu-169, and His-355 each coordinate Zn(2+).

Belongs to the peptidase M20A family. ArgE subfamily. In terms of assembly, homodimer. It depends on Zn(2+) as a cofactor. Co(2+) is required as a cofactor. Requires glutathione as cofactor.

The protein resides in the cytoplasm. The enzyme catalyses N(2)-acetyl-L-ornithine + H2O = L-ornithine + acetate. The protein operates within amino-acid biosynthesis; L-arginine biosynthesis; L-ornithine from N(2)-acetyl-L-ornithine (linear): step 1/1. Catalyzes the hydrolysis of the amide bond of N(2)-acetylated L-amino acids. Cleaves the acetyl group from N-acetyl-L-ornithine to form L-ornithine, an intermediate in L-arginine biosynthesis pathway, and a branchpoint in the synthesis of polyamines. This Shigella sonnei (strain Ss046) protein is Acetylornithine deacetylase.